The following is a 550-amino-acid chain: Chaperonin GroEL (550 aa).

ATP is bound by residues 30 to 33 (TLGP), Lys-51, 87 to 91 (DGTTT), Gly-414, and Asp-494.

Belongs to the chaperonin (HSP60) family. In terms of assembly, forms a cylinder of 14 subunits composed of two heptameric rings stacked back-to-back. Interacts with the co-chaperonin GroES.

It localises to the cytoplasm. It carries out the reaction ATP + H2O + a folded polypeptide = ADP + phosphate + an unfolded polypeptide.. Its function is as follows. Together with its co-chaperonin GroES, plays an essential role in assisting protein folding. The GroEL-GroES system forms a nano-cage that allows encapsulation of the non-native substrate proteins and provides a physical environment optimized to promote and accelerate protein folding. The chain is Chaperonin GroEL from Buchnera aphidicola subsp. Thelaxes suberi.